We begin with the raw amino-acid sequence, 152 residues long: Xanthine-guanine phosphoribosyltransferase (152 aa).

Residues 37-38 (RG), arginine 69, and 88-96 (DDLVDSGDT) contribute to the 5-phospho-alpha-D-ribose 1-diphosphate site. Arginine 69 contributes to the GMP binding site. Position 89 (aspartate 89) interacts with Mg(2+). Guanine contacts are provided by aspartate 92 and isoleucine 135. The xanthine site is built by aspartate 92 and isoleucine 135. GMP contacts are provided by residues 92–96 (DSGDT) and 134–135 (WI).

Belongs to the purine/pyrimidine phosphoribosyltransferase family. XGPT subfamily. In terms of assembly, homotetramer. Mg(2+) is required as a cofactor.

The protein localises to the cell inner membrane. The catalysed reaction is GMP + diphosphate = guanine + 5-phospho-alpha-D-ribose 1-diphosphate. It carries out the reaction XMP + diphosphate = xanthine + 5-phospho-alpha-D-ribose 1-diphosphate. The enzyme catalyses IMP + diphosphate = hypoxanthine + 5-phospho-alpha-D-ribose 1-diphosphate. Its pathway is purine metabolism; GMP biosynthesis via salvage pathway; GMP from guanine: step 1/1. It functions in the pathway purine metabolism; XMP biosynthesis via salvage pathway; XMP from xanthine: step 1/1. Purine salvage pathway enzyme that catalyzes the transfer of the ribosyl-5-phosphate group from 5-phospho-alpha-D-ribose 1-diphosphate (PRPP) to the N9 position of the 6-oxopurines guanine and xanthine to form the corresponding ribonucleotides GMP (guanosine 5'-monophosphate) and XMP (xanthosine 5'-monophosphate), with the release of PPi. To a lesser extent, also acts on hypoxanthine. The sequence is that of Xanthine-guanine phosphoribosyltransferase from Aliivibrio fischeri (strain ATCC 700601 / ES114) (Vibrio fischeri).